The following is a 222-amino-acid chain: Eukaryotic translation initiation factor 3 subunit K (222 aa).

Positions 46 to 208 (YDLEANLAVL…KIKTKNITEK (163 aa)) constitute a PCI domain.

This sequence belongs to the eIF-3 subunit K family. As to quaternary structure, component of the eukaryotic translation initiation factor 3 (eIF-3) complex. The eIF-3 complex interacts with pix.

It is found in the cytoplasm. In terms of biological role, component of the eukaryotic translation initiation factor 3 (eIF-3) complex, which is involved in protein synthesis of a specialized repertoire of mRNAs and, together with other initiation factors, stimulates binding of mRNA and methionyl-tRNAi to the 40S ribosome. The eIF-3 complex specifically targets and initiates translation of a subset of mRNAs involved in cell proliferation. This Drosophila yakuba (Fruit fly) protein is Eukaryotic translation initiation factor 3 subunit K.